The sequence spans 182 residues: UPF0316 protein BCQ_3166 (182 aa).

The next 3 membrane-spanning stretches (helical) occupy residues leucine 6–valine 26, serine 32–phenylalanine 52, and tryptophan 58–isoleucine 78.

It belongs to the UPF0316 family.

The protein resides in the cell membrane. The polypeptide is UPF0316 protein BCQ_3166 (Bacillus cereus (strain Q1)).